Consider the following 507-residue polypeptide: Sulfatase (507 aa).

A signal peptide spans 1–18 (MKTRYFLLLGICMLSCRT). Positions 39, 40, and 79 each coordinate Ca(2+). Cys79 acts as the Nucleophile in catalysis. The residue at position 79 (Cys79) is a 3-oxoalanine (Cys). Residue His139 is part of the active site. The Ca(2+) site is built by Asp325 and His326.

The protein belongs to the sulfatase family. It depends on Ca(2+) as a cofactor. The conversion to 3-oxoalanine (also known as C-formylglycine, FGly), of a serine or cysteine residue in prokaryotes and of a cysteine residue in eukaryotes, is critical for catalytic activity. This post-translational modification is severely defective in multiple sulfatase deficiency (MSD).

It localises to the periplasm. Sulfatase that may be involved in ulvan degradation. Ulvan is the main polysaccharide component of the Ulvales (green seaweed) cell wall. It is composed of disaccharide building blocks comprising 3-sulfated rhamnose (Rha3S) linked to D-glucuronic acid (GlcA), L-iduronic acid (IduA), or D-xylose (Xyl). Has no activity on different ulvan polymers. This Formosa agariphila (strain DSM 15362 / KCTC 12365 / LMG 23005 / KMM 3901 / M-2Alg 35-1) protein is Sulfatase.